The sequence spans 90 residues: Small ribosomal subunit protein uS15c (90 aa).

It belongs to the universal ribosomal protein uS15 family. As to quaternary structure, part of the 30S ribosomal subunit.

The protein resides in the plastid. Its subcellular location is the chloroplast. The sequence is that of Small ribosomal subunit protein uS15c (rps15) from Mesostigma viride (Green alga).